The sequence spans 436 residues: Type II methyltransferase M.BsuRI (436 aa).

The SAM-dependent MTase C5-type domain maps to 59 to 409 (INVLSLFSGC…SPIANWAINY (351 aa)). The active site involves cysteine 157.

The protein belongs to the class I-like SAM-binding methyltransferase superfamily. C5-methyltransferase family. As to quaternary structure, monomer.

The catalysed reaction is a 2'-deoxycytidine in DNA + S-adenosyl-L-methionine = a 5-methyl-2'-deoxycytidine in DNA + S-adenosyl-L-homocysteine + H(+). Functionally, a methylase, recognizes the double-stranded sequence 5'-GGCC-3', methylates C-3 on both strands, and protects the DNA from cleavage by the BsuRI endonuclease. The chain is Type II methyltransferase M.BsuRI (hsdRM) from Bacillus subtilis.